We begin with the raw amino-acid sequence, 313 residues long: Putative serine protease 29 (313 aa).

A compositionally biased stretch (pro residues) spans 1 to 22 (MPTTPDPGSEPPARTPRPPPLT). Residues 1-27 (MPTTPDPGSEPPARTPRPPPLTPGLSP) form a disordered region. Residues 68–310 (IVGGHNAPPG…YVPWILQQVG (243 aa)) enclose the Peptidase S1 domain. Cysteine 99 and cysteine 115 are oxidised to a cystine. Histidine 114 functions as the Charge relay system in the catalytic mechanism. Asparagine 143 carries N-linked (GlcNAc...) asparagine glycosylation. The active-site Charge relay system is aspartate 161. 3 cysteine pairs are disulfide-bonded: cysteine 193-cysteine 268, cysteine 226-cysteine 249, and cysteine 258-cysteine 286. Catalysis depends on serine 262, which acts as the Charge relay system.

It belongs to the peptidase S1 family.

Its subcellular location is the secreted. This Homo sapiens (Human) protein is Putative serine protease 29 (PRSS29P).